Here is a 288-residue protein sequence, read N- to C-terminus: Bifunctional protein MdtA (288 aa).

NADP(+)-binding positions include Thr-129–Val-132, Arg-152–Lys-156, Thr-195–Ala-198, and Lys-256.

Homotrimer.

The protein resides in the cytoplasm. It catalyses the reaction 5,10-methylenetetrahydromethanopterin + NADP(+) = 5,10-methenyl-5,6,7,8-tetrahydromethanopterin + NADPH. It carries out the reaction (6R)-5,10-methylene-5,6,7,8-tetrahydrofolate + NADP(+) = (6R)-5,10-methenyltetrahydrofolate + NADPH. It functions in the pathway one-carbon metabolism; formaldehyde degradation; formate from formaldehyde (H(4)MPT route): step 2/5. Catalyzes the dehydrogenation of methylene-H(4)MPT. Can also catalyze the reversible dehydrogenation of methylene-H(4)F with 20-fold lower catalytic efficiency. This chain is Bifunctional protein MdtA, found in Methylorubrum extorquens (strain ATCC 14718 / DSM 1338 / JCM 2805 / NCIMB 9133 / AM1) (Methylobacterium extorquens).